The chain runs to 248 residues: Cyclin-Q (248 aa).

Met-1 is subject to N-acetylmethionine. Positions 1-12 (MEAPEGGGGGPA) are enriched in gly residues. A disordered region spans residues 1-21 (MEAPEGGGGGPAARGPEGQPA).

Belongs to the cyclin family. Cyclin-like FAM58 subfamily. In terms of assembly, associates with CDK10 to promote its kinase activity. Interacts with SALL1.

In terms of biological role, activating cyclin for the cyclin-associated kinase CDK10. This is Cyclin-Q from Homo sapiens (Human).